The primary structure comprises 895 residues: Microsomal triglyceride transfer protein large subunit (895 aa).

An N-terminal signal peptide occupies residues 1–18; the sequence is MILLAVLFLCFFSSYSAS. One can recognise a Vitellogenin domain in the interval 28 to 659; that stretch reads LNNERLYKLT…VFQYLGKAGL (632 aa). A disulfide bridge connects residues Cys174 and Cys194.

As to quaternary structure, heterodimer; heterodimerizes with the protein disulfide isomerase (P4HB/PDI). Interacts with APOB. Interacts with PRAP1.

It localises to the endoplasmic reticulum. It is found in the golgi apparatus. The enzyme catalyses a 1,2-diacyl-sn-glycero-3-phosphocholine(in) = a 1,2-diacyl-sn-glycero-3-phosphocholine(out). The catalysed reaction is a 1,2-diacyl-sn-glycero-3-phosphoethanolamine(in) = a 1,2-diacyl-sn-glycero-3-phosphoethanolamine(out). It carries out the reaction a cholesterol ester(in) = a cholesterol ester(out). It catalyses the reaction a triacyl-sn-glycerol(in) = a triacyl-sn-glycerol(out). Functionally, catalyzes the transport of triglyceride, cholesteryl ester, and phospholipid between phospholipid surfaces. Required for the assembly and secretion of plasma lipoproteins that contain apolipoprotein B. May be involved in regulating cholesteryl ester biosynthesis in cells that produce lipoproteins. The sequence is that of Microsomal triglyceride transfer protein large subunit (MTTP) from Mesocricetus auratus (Golden hamster).